Consider the following 596-residue polypeptide: Elongation factor 4 (596 aa).

The tr-type G domain occupies 2-183 (KNIRNFSIIA…AIITRIPAPN (182 aa)). Residues 14 to 19 (DHGKST) and 130 to 133 (NKID) each bind GTP.

Belongs to the TRAFAC class translation factor GTPase superfamily. Classic translation factor GTPase family. LepA subfamily.

The protein localises to the cell inner membrane. The catalysed reaction is GTP + H2O = GDP + phosphate + H(+). Functionally, required for accurate and efficient protein synthesis under certain stress conditions. May act as a fidelity factor of the translation reaction, by catalyzing a one-codon backward translocation of tRNAs on improperly translocated ribosomes. Back-translocation proceeds from a post-translocation (POST) complex to a pre-translocation (PRE) complex, thus giving elongation factor G a second chance to translocate the tRNAs correctly. Binds to ribosomes in a GTP-dependent manner. In Campylobacter concisus (strain 13826), this protein is Elongation factor 4.